A 1522-amino-acid chain; its full sequence is Dicer-like protein 1 (1522 aa).

Over residues Met-1–Asp-12 the composition is skewed to acidic residues. The disordered stretch occupies residues Met-1 to Glu-37. Residues Leu-76–Leu-258 enclose the Helicase ATP-binding domain. An ATP-binding site is contributed by Leu-89–Thr-96. The DEAH box signature appears at Asp-202–His-205. The Helicase C-terminal domain maps to Trp-408–Ile-576. Positions Ser-600 to Ala-700 constitute a Dicer dsRNA-binding fold domain. Residues Pro-859–Asn-980 enclose the PAZ domain. RNase III domains follow at residues Ile-995–His-1166 and Ala-1222–Glu-1373. Mg(2+) is bound by residues Glu-1262, Asp-1359, and Glu-1362. Residues Thr-1409 to Gly-1478 form the DRBM domain. Zn(2+) contacts are provided by Cys-1421, His-1449, Cys-1490, and Cys-1492.

It belongs to the helicase family. Dicer subfamily. The cofactor is Mg(2+). Requires Mn(2+) as cofactor.

Functionally, dicer-like endonuclease involved in cleaving double-stranded RNA in the RNA interference (RNAi) pathway. Produces 21 to 25 bp dsRNAs (siRNAs) which target the selective destruction of homologous RNAs leading to sequence-specific suppression of gene expression, called post-transcriptional gene silencing (PTGS). Part of a broad host defense response against viral infection and transposons. The protein is Dicer-like protein 1 (DCL1) of Phaeosphaeria nodorum (strain SN15 / ATCC MYA-4574 / FGSC 10173) (Glume blotch fungus).